The sequence spans 373 residues: MACNSTPMGTYEHLLLNVSNTLDPGDTPLSAPLRISLAIMMLLMIVVGFLGNTVVCIIVYQRPAMRSAINLLLATLAFSDIMLSLCCMPFTAITLITVRWHFGDHFCRLSATLYWFFVLEGVAILLIISVDRFLIIVQRQDKLNPRRAKMIIAASWVLSFCISAPSFTGWTFMEVPARAPQCVLGYTEFPAERAYVVTLVVAVFFAPFGVMLCSYLCILNTVRKNAVRVHNQSDSLDLRQLTGAGLRRLRRQQQQASLDLSFKTKAFTTILILFVGFSLCWLPHSVYSLLSAFSRRFYYSASFYTTSTCVLWLSYLKSVFNPIVYCWRIKKFREACIELLPHTFQILPKVPERIQRKIQPSTIYVCNENQSAV.

Residues 1-38 (MACNSTPMGTYEHLLLNVSNTLDPGDTPLSAPLRISLA) are Extracellular-facing. Asparagine 17 is a glycosylation site (N-linked (GlcNAc...) asparagine). The chain crosses the membrane as a helical span at residues 39 to 59 (IMMLLMIVVGFLGNTVVCIIV). Over 60 to 75 (YQRPAMRSAINLLLAT) the chain is Cytoplasmic. A helical transmembrane segment spans residues 76–96 (LAFSDIMLSLCCMPFTAITLI). The Extracellular portion of the chain corresponds to 97–109 (TVRWHFGDHFCRL). Residues 110–130 (SATLYWFFVLEGVAILLIISV) traverse the membrane as a helical segment. Residues 131–149 (DRFLIIVQRQDKLNPRRAK) are Cytoplasmic-facing. Residues 150–170 (MIIAASWVLSFCISAPSFTGW) traverse the membrane as a helical segment. Topologically, residues 171–198 (TFMEVPARAPQCVLGYTEFPAERAYVVT) are extracellular. A helical transmembrane segment spans residues 199–219 (LVVAVFFAPFGVMLCSYLCIL). Over 220-269 (NTVRKNAVRVHNQSDSLDLRQLTGAGLRRLRRQQQQASLDLSFKTKAFTT) the chain is Cytoplasmic. A helical membrane pass occupies residues 270–290 (ILILFVGFSLCWLPHSVYSLL). Residues 291-306 (SAFSRRFYYSASFYTT) lie on the Extracellular side of the membrane. The helical transmembrane segment at 307-327 (STCVLWLSYLKSVFNPIVYCW) threads the bilayer. Topologically, residues 328–373 (RIKKFREACIELLPHTFQILPKVPERIQRKIQPSTIYVCNENQSAV) are cytoplasmic.

It belongs to the G-protein coupled receptor 1 family. In terms of tissue distribution, brain specific.

The protein localises to the cell membrane. In terms of biological role, orphan receptor. May play a role in brain function. The polypeptide is Probable G-protein coupled receptor 45 (Gpr45) (Mus musculus (Mouse)).